A 73-amino-acid chain; its full sequence is Translation initiation factor IF-1 (73 aa).

Residues 1–73 (MAKKEGALEL…TRGRIVYRHK (73 aa)) enclose the S1-like domain.

This sequence belongs to the IF-1 family. In terms of assembly, component of the 30S ribosomal translation pre-initiation complex which assembles on the 30S ribosome in the order IF-2 and IF-3, IF-1 and N-formylmethionyl-tRNA(fMet); mRNA recruitment can occur at any time during PIC assembly.

It is found in the cytoplasm. Its function is as follows. One of the essential components for the initiation of protein synthesis. Stabilizes the binding of IF-2 and IF-3 on the 30S subunit to which N-formylmethionyl-tRNA(fMet) subsequently binds. Helps modulate mRNA selection, yielding the 30S pre-initiation complex (PIC). Upon addition of the 50S ribosomal subunit IF-1, IF-2 and IF-3 are released leaving the mature 70S translation initiation complex. The chain is Translation initiation factor IF-1 from Cutibacterium acnes (strain DSM 16379 / KPA171202) (Propionibacterium acnes).